A 529-amino-acid chain; its full sequence is MQQRRPVRRALLSVSDKAGIVEFAQALSARGVELLSTGGTARLLAEKGLPVTEVSDYTGFPEMMDGRVKTLHPKVHGGILGRRGQDDTIMEEHQIQPIDMVVVNLYPFAQTVAREGCSLEDAVENIDIGGPTMVRSAAKNHKDVAIVVKSSDYDAIIKEIDANEGSLTLETRFDLAIKAFEHTAAYDSMIANYFGSMVPAYHGESKEAAGRFPRTLNLNFIKKQDMRYGENSHQQAAFYIEENVKEASVATATQVQGKALSYNNIADTDAALECVKEFAEPACVIVKHANPCGVAIGNSILDAYDRAYKTDPTSAFGGIIAFNRELDAETAQAIISRQFVEVIIAPSASEEALKITAAKQNVRVLTCGQWGERVPGLDFKRVNGGLLVQDRDLGMVGAEELRVVTKRQPSEQELRDALFCWKVAKFVKSNAIVYAKNNMTIGIGAGQMSRVYSAKIAGIKAADEGLEVKGSSMASDAFFPFRDGIDAAAAAGVTCVIQPGGSIRDDEVIAAADEHGIAMLFTDMRHFRH.

Residues 1 to 148 (MQQRRPVRRA…KNHKDVAIVV (148 aa)) enclose the MGS-like domain. K287 is subject to N6-acetyllysine.

Belongs to the PurH family.

It catalyses the reaction (6R)-10-formyltetrahydrofolate + 5-amino-1-(5-phospho-beta-D-ribosyl)imidazole-4-carboxamide = 5-formamido-1-(5-phospho-D-ribosyl)imidazole-4-carboxamide + (6S)-5,6,7,8-tetrahydrofolate. The enzyme catalyses IMP + H2O = 5-formamido-1-(5-phospho-D-ribosyl)imidazole-4-carboxamide. The protein operates within purine metabolism; IMP biosynthesis via de novo pathway; 5-formamido-1-(5-phospho-D-ribosyl)imidazole-4-carboxamide from 5-amino-1-(5-phospho-D-ribosyl)imidazole-4-carboxamide (10-formyl THF route): step 1/1. Its pathway is purine metabolism; IMP biosynthesis via de novo pathway; IMP from 5-formamido-1-(5-phospho-D-ribosyl)imidazole-4-carboxamide: step 1/1. The chain is Bifunctional purine biosynthesis protein PurH from Escherichia coli (strain SMS-3-5 / SECEC).